Reading from the N-terminus, the 360-residue chain is MLTWLTQFSPHFQPLNLFRYITFRTGGATATALFFVFFFGPRIIAALRIKQGKGQPIRLDGPQSHLLTKKGTPTMGGLMILSGLIVSTLLWANLRNHYVWVVLFVTTGFGLIGFYDDYLKVSKQSHKGFPGRIRLLLEVGIAGAACYAMMLLGTPHTTSLAFPAINGFAVDLGLFFLVVGPFVIVSAGNAVNLTDGLDGLAIVPVMIAAGTFGVIAYLAGNAIFSTYLGINFVPGAGELSVVTGAVIGAGLGFLWFNAPPAQIFMGDTGSLALGGLLGAVAVAVKHEIVLAIVGGLFVLETLSVIVQVISFKLTGRRVFKMAPIHHHFEQLGWSEPQVVVRFWIIAFVLALIGLSTLKLR.

Helical transmembrane passes span 27–47, 74–94, 99–119, 135–155, 165–185, 199–219, 236–256, 263–283, 288–308, and 337–357; these read GATA…IAAL, TMGG…WANL, VWVV…DDYL, LLLE…LGTP, INGF…FVIV, GLAI…AYLA, AGEL…FLWF, IFMG…VAVA, IVLA…IVQV, and QVVV…LSTL.

It belongs to the glycosyltransferase 4 family. MraY subfamily. Mg(2+) is required as a cofactor.

It is found in the cell inner membrane. It carries out the reaction UDP-N-acetyl-alpha-D-muramoyl-L-alanyl-gamma-D-glutamyl-meso-2,6-diaminopimeloyl-D-alanyl-D-alanine + di-trans,octa-cis-undecaprenyl phosphate = di-trans,octa-cis-undecaprenyl diphospho-N-acetyl-alpha-D-muramoyl-L-alanyl-D-glutamyl-meso-2,6-diaminopimeloyl-D-alanyl-D-alanine + UMP. It functions in the pathway cell wall biogenesis; peptidoglycan biosynthesis. Functionally, catalyzes the initial step of the lipid cycle reactions in the biosynthesis of the cell wall peptidoglycan: transfers peptidoglycan precursor phospho-MurNAc-pentapeptide from UDP-MurNAc-pentapeptide onto the lipid carrier undecaprenyl phosphate, yielding undecaprenyl-pyrophosphoryl-MurNAc-pentapeptide, known as lipid I. This chain is Phospho-N-acetylmuramoyl-pentapeptide-transferase, found in Methylocella silvestris (strain DSM 15510 / CIP 108128 / LMG 27833 / NCIMB 13906 / BL2).